The chain runs to 185 residues: Elongation factor P (185 aa).

The protein belongs to the elongation factor P family.

It is found in the cytoplasm. Its pathway is protein biosynthesis; polypeptide chain elongation. Its function is as follows. Involved in peptide bond synthesis. Stimulates efficient translation and peptide-bond synthesis on native or reconstituted 70S ribosomes in vitro. Probably functions indirectly by altering the affinity of the ribosome for aminoacyl-tRNA, thus increasing their reactivity as acceptors for peptidyl transferase. This chain is Elongation factor P, found in Clostridium novyi (strain NT).